The sequence spans 121 residues: YEGHCYQTFKLFKTWADAESFCTEQAKGGHLVSIESDGEADFVAQLVAENIQKTEIYVWVGLRVQGKEQQCSSEWSDGSSVSYQNWIEAESKTCLGLQKETEFRKWFNIYCGERNPFVCEA.

The C-type lectin domain maps to 1–120; the sequence is YEGHCYQTFK…CGERNPFVCE (120 aa). 2 disulfide bridges follow: cysteine 22-cysteine 119 and cysteine 94-cysteine 111. Residues serine 33, glutamate 35, and glutamate 39 each coordinate Ca(2+). Ca(2+) is bound at residue glutamate 120.

This sequence belongs to the snaclec family. Heterodimer of subunits A and B; disulfide-linked. Expressed by the venom gland.

It is found in the secreted. Functionally, anticoagulant protein which binds to the gamma-carboxyglutamic acid-domain regions of factor IX (F9) (but not factor X) in the presence of calcium with a 1 to 1 stoichiometry. The protein is Snaclec coagulation factor IX-binding protein subunit A of Gloydius halys (Chinese water mocassin).